A 96-amino-acid polypeptide reads, in one-letter code: CRISPR-associated endoribonuclease Cas2 (96 aa).

Asp8 is a binding site for Mg(2+).

This sequence belongs to the CRISPR-associated endoribonuclease Cas2 protein family. In terms of assembly, homodimer, forms a heterotetramer with a Cas1 homodimer. The cofactor is Mg(2+).

CRISPR (clustered regularly interspaced short palindromic repeat), is an adaptive immune system that provides protection against mobile genetic elements (viruses, transposable elements and conjugative plasmids). CRISPR clusters contain sequences complementary to antecedent mobile elements and target invading nucleic acids. CRISPR clusters are transcribed and processed into CRISPR RNA (crRNA). Functions as a ssRNA-specific endoribonuclease. Involved in the integration of spacer DNA into the CRISPR cassette. The polypeptide is CRISPR-associated endoribonuclease Cas2 (Chlorobaculum tepidum (strain ATCC 49652 / DSM 12025 / NBRC 103806 / TLS) (Chlorobium tepidum)).